The chain runs to 847 residues: Putative disease resistance RPP13-like protein 2 (847 aa).

Residues 26-42 (GVKDDLEELKTELTCIQ) adopt a coiled-coil conformation. Residues 142–446 (STSRVREVRR…AEGFIQEDEE (305 aa)) form the NB-ARC domain. 191-198 (GMEGLGKT) provides a ligand contact to ATP. LRR repeat units lie at residues 587–610 (LVHL…ISNL), 612–634 (FLQT…NLTS), 703–726 (LKNL…TVRF), 749–774 (FPSL…KLQR), and 807–830 (IKRL…NLDN).

This sequence belongs to the disease resistance NB-LRR family. RPP13 subfamily.

Potential disease resistance protein. The chain is Putative disease resistance RPP13-like protein 2 (RPP13L2) from Arabidopsis thaliana (Mouse-ear cress).